The chain runs to 951 residues: Plasma membrane ATPase (951 aa).

Helical transmembrane passes span 61–81, 93–113, 243–263, and 277–297; these read FLGF…IMAI, WEDF…SFIE, IGNF…IVMF, and LLVL…SVTM. Residue aspartate 329 is the 4-aspartylphosphate intermediate of the active site. Mg(2+) is bound by residues aspartate 588 and aspartate 592. 6 helical membrane-spanning segments follow: residues 647–667, 671–691, 709–729, 752–772, 785–805, and 814–834; these read IYAV…ALIW, FSPF…MTIS, IFAT…IFFW, EMMS…IFVT, LLLV…AVYA, and GIGW…YFPL.

The protein belongs to the cation transport ATPase (P-type) (TC 3.A.3) family. Type IIIA subfamily.

It is found in the cell membrane. The catalysed reaction is ATP + H2O + H(+)(in) = ADP + phosphate + 2 H(+)(out). The plasma membrane ATPase of plants and fungi is a hydrogen ion pump. The proton gradient it generates drives the active transport of nutrients by H(+)-symport. The resulting external acidification and/or internal alkinization may mediate growth responses. This chain is Plasma membrane ATPase, found in Oryza sativa subsp. japonica (Rice).